Reading from the N-terminus, the 570-residue chain is Serine/threonine-protein kinase Pink1, mitochondrial (570 aa).

Residues 1 to 5 constitute a mitochondrion transit peptide; the sequence is MSVRA. Over 6–96 the chain is Mitochondrial intermembrane; that stretch reads VGSRLFKHGR…AELRKKATRR (91 aa). Residues 97-120 form a helical membrane-spanning segment; it reads ILFGDSAPFFALVGVSIASGTGIL. Topologically, residues 121 to 570 are cytoplasmic; it reads TKEEELEGVC…WIQENLPELD (450 aa). In terms of domain architecture, Protein kinase spans 162 to 484; sequence LSLGKPIAKG…VAANVCQLFL (323 aa). K196 contributes to the ATP binding site. A Phosphoserine; by autocatalysis modification is found at S205. E217 contributes to the Mg(2+) binding site. Residues K295, Y297, and N300 each coordinate ATP. Catalysis depends on D337, which acts as the Proton acceptor. D341 is an ATP binding site. Mg(2+)-binding residues include N342 and D359. D359 provides a ligand contact to ATP. Residue S377 is modified to Phosphoserine; by autocatalysis. Position 386 is a phosphothreonine; by autocatalysis (T386). The residue at position 530 (T530) is a Phosphothreonine.

Belongs to the protein kinase superfamily. Ser/Thr protein kinase family. Mg(2+) serves as cofactor. Proteolytically cleaved. In healthy cells, the precursor is continuously imported into mitochondria where it is proteolytically cleaved into its short form by the mitochondrial rhomboid protease rho-7 (TcasGA2_TC013516). The short form is then released into the cytosol where it rapidly undergoes proteasome-dependent degradation. In unhealthy cells, when cellular stress conditions lead to the loss of mitochondrial membrane potential, mitochondrial import is impaired leading to the precursor accumulating on the outer mitochondrial membrane (OMM). Post-translationally, autophosphorylated on Ser-205, which activates kinase activity and is required for substrate recognition. Loss of mitochondrial membrane potential results in the precursor accumulating on the outer mitochondrial membrane (OMM) where it is activated by autophosphorylation at Ser-205. Autophosphorylation is sufficient and essential for selective recruitment of park to depolarized mitochondria, likely via Pink1-dependent phosphorylation of polyubiquitin chains. Also autophosphorylated at Ser-377, Thr-386 and possibly Thr-530. Another report found evidence of autophosphorylation at Ser-154, Thr-186, Thr-218, Ser-267 and Thr-530, as well as a number of other minor sites, but determined that phosphorylation at these sites is not required for enzyme activity and may not occur in vivo.

It is found in the mitochondrion outer membrane. It localises to the mitochondrion inner membrane. The protein localises to the cytoplasm. The protein resides in the cytosol. It carries out the reaction L-seryl-[protein] + ATP = O-phospho-L-seryl-[protein] + ADP + H(+). The catalysed reaction is L-threonyl-[protein] + ATP = O-phospho-L-threonyl-[protein] + ADP + H(+). In terms of biological role, acts as a serine/threonine-protein kinase. Exhibits a substrate preference for proline at position P+1 and a general preference at several residues for basic residues such as arginine. Also exhibits moderate preferences for a phosphotyrosine at position P-3 and a tryptophan at P-5. Critical to mitochondrial homeostasis it mediates several pathways that maintain mitochondrial health and function. Protects against mitochondrial dysfunction during cellular stress by phosphorylating mitochondrial proteins such as park and likely Drp1, to coordinate mitochondrial quality control mechanisms that remove and replace dysfunctional mitochondrial components. Depending on the severity of mitochondrial damage and/or dysfunction, activity ranges from preventing apoptosis and stimulating mitochondrial biogenesis to regulating mitochondrial dynamics and eliminating severely damaged mitochondria via mitophagy. Appears to be particularly important in maintaining the physiology and function of cells with high energy demands that are undergoing stress or altered metabolic environment, including spermatids, muscle cells and neurons such as the dopaminergic (DA) neurons. Mediates the translocation and activation of park at the outer membrane (OMM) of dysfunctional/depolarized mitochondria. At the OMM of damaged mitochondria, phosphorylates pre-existing polyubiquitin chains, the Pink1-phosphorylated polyubiquitin then recruits park from the cytosol to the OMM where park is fully activated by phosphorylation at 'Ser-80' by Pink1. When cellular stress results in irreversible mitochondrial damage, functions with park to promote the clearance of dysfunctional and/or depolarized mitochondria by selective autophagy (mitophagy). The Pink1-park pathway also promotes fission and/or inhibits fusion of damaged mitochondria, by phosphorylating and thus promoting the park-dependent degradation of proteins involved in mitochondrial fusion/fission such as Marf, Opa1 and fzo. This prevents the refusion of unhealthy mitochondria with the mitochondrial network or initiates mitochondrial fragmentation facilitating their later engulfment by autophagosomes. Also likely to promote mitochondrial fission independently of park and Atg7-mediated mitophagy, via the phosphorylation and activation of Drp1. Regulates motility of damaged mitochondria by phosphorylating Miro which likely promotes its park-dependent degradation by the proteasome; in motor neurons, this inhibits mitochondrial intracellular anterograde transport along the axons which probably increases the chance of the mitochondria being eliminated in the soma. The Pink1-park pathway is also involved in mitochondrial regeneration processes such as promoting mitochondrial biogenesis, activating localized mitochondrial repair, promoting selective turnover of mitochondrial proteins and initiating the mitochondrial import of endogenous proteins. Involved in mitochondrial biogenesis by promoting the park-dependent ubiquitination of transcriptional repressor Paris which leads to its subsequent proteasomal degradation and allows activation of the transcription factor srl. Functions with park to promote localized mitochondrial repair by activating the translation of specific nuclear-encoded mitochondrial RNAs (nc-mtRNAs) on the mitochondrial surface, including several key electron transport chain component nc-mtRNAs. During oogenesis, phosphorylates and inactivates larp on the membrane of defective mitochondria, thus impairing local translation and mtDNA replication and consequently, reducing transmission of deleterious mtDNA mutations to the mature oocyte. Phosphorylates the mitochondrial acyl-CoA dehydrogenase Mcad, and appears to be important for maintaining fatty acid and amino acid metabolism via a mechanism that is independent of it's role in maintaining production of ATP. This Tribolium castaneum (Red flour beetle) protein is Serine/threonine-protein kinase Pink1, mitochondrial.